The following is an 89-amino-acid chain: Mitochondrial import inner membrane translocase subunit Tim9 (89 aa).

Alanine 2 is subject to N-acetylalanine. A Twin CX3C motif motif is present at residues cysteine 28–cysteine 52. 2 disulfides stabilise this stretch: cysteine 28/cysteine 52 and cysteine 32/cysteine 48.

This sequence belongs to the small Tim family. In terms of assembly, heterohexamer; composed of 3 copies of TIMM9 and 3 copies of TIMM10/TIM10A, named soluble 70 kDa complex. The complex forms a 6-bladed alpha-propeller structure and associates with the TIMM22 component of the TIM22 complex. Interacts with multi-pass transmembrane proteins in transit. Also forms a complex composed of TIMM9, TIMM10/TIM10A and FXC1/TIM10B. As to expression, ubiquitous, with highest expression in heart, kidney, liver and skeletal muscle.

The protein resides in the mitochondrion inner membrane. In terms of biological role, mitochondrial intermembrane chaperone that participates in the import and insertion of multi-pass transmembrane proteins into the mitochondrial inner membrane. May also be required for the transfer of beta-barrel precursors from the TOM complex to the sorting and assembly machinery (SAM complex) of the outer membrane. Acts as a chaperone-like protein that protects the hydrophobic precursors from aggregation and guide them through the mitochondrial intermembrane space. The sequence is that of Mitochondrial import inner membrane translocase subunit Tim9 (TIMM9) from Homo sapiens (Human).